The sequence spans 449 residues: Putative F-box/LRR-repeat protein At3g44090 (449 aa).

The 55-residue stretch at 23 to 77 folds into the F-box domain; the sequence is LASMDCLPDDLLVQILYFLPTKEAISTSLLSKRWRTLYSLVHNLDLDDYIFWHHE. LRR repeat units lie at residues 133–163, 186–212, 214–231, 247–278, 286–311, and 320–345; these read YYNL…SLGT, YIWF…TIHH, FRPF…SVTI, TPNV…ELDL, RQVQ…HLTY, and SKKR…VLSG.

The sequence is that of Putative F-box/LRR-repeat protein At3g44090 from Arabidopsis thaliana (Mouse-ear cress).